The primary structure comprises 400 residues: Multidrug resistance protein MdtH (400 aa).

A run of 10 helical transmembrane segments spans residues 13 to 33, 34 to 54, 99 to 116, 139 to 159, 165 to 185, 214 to 234, 244 to 264, 289 to 309, 340 to 360, and 365 to 385; these read YFLL…FPLI, SIRF…ALGL, PWIL…GTLF, LLLM…SWLL, LVCW…AWLL, VLTL…FPIV, AVKW…YPIA, FPVG…LFYL, LGLA…YDIG, and LPEL…YALH.

It belongs to the major facilitator superfamily. DHA1 family. MdtH (TC 2.A.1.2.21) subfamily.

The protein resides in the cell inner membrane. This is Multidrug resistance protein MdtH from Proteus mirabilis (strain HI4320).